A 459-amino-acid chain; its full sequence is Fibrinogen C domain-containing protein 1 (459 aa).

Residues 1-22 are disordered; that stretch reads MVHERWKTVGSASQLEDRPRDK. Topologically, residues 1 to 33 are cytoplasmic; that stretch reads MVHERWKTVGSASQLEDRPRDKPQRASCSYVLC. The helical; Signal-anchor for type II membrane protein transmembrane segment at 34 to 54 threads the bilayer; that stretch reads TVLLSLAVLLAVAVTGVVLFL. Over 55 to 459 the chain is Extracellular; that stretch reads NHTHTPGTAP…MKIRPVREDR (405 aa). The region spanning 233-456 is the Fibrinogen C-terminal domain; the sequence is CANGSRPRDC…FSEMKIRPVR (224 aa). An intrachain disulfide couples Cys-242 to Cys-271. Asn-338 is a glycosylation site (N-linked (GlcNAc...) asparagine). Positions 391 and 393 each coordinate Ca(2+). Cys-399 and Cys-412 are oxidised to a cystine.

As to quaternary structure, homotetramer; disulfide-linked.

The protein resides in the membrane. Its function is as follows. Acetyl group-binding receptor which shows a high-affinity and calcium-dependent binding to acetylated structures such as chitin, some N-acetylated carbohydrates, and amino acids, but not to their non-acetylated counterparts. Can facilitate the endocytosis of acetylated components. In Mus musculus (Mouse), this protein is Fibrinogen C domain-containing protein 1 (Fibcd1).